Here is a 551-residue protein sequence, read N- to C-terminus: Cation/acetate symporter ActP (551 aa).

14 helical membrane passes run Ala-8–Val-28, Trp-35–Ala-55, Gly-78–Val-98, Gly-105–Glu-125, Leu-151–Ala-171, Val-185–Ala-205, Trp-208–Val-228, Ile-264–Leu-284, Gly-305–Val-325, Leu-357–Leu-377, Val-406–Glu-426, Ile-430–Leu-450, Val-465–Trp-485, and Phe-496–Phe-516.

The protein belongs to the sodium:solute symporter (SSF) (TC 2.A.21) family.

Its subcellular location is the cell inner membrane. Functionally, transports acetate. The chain is Cation/acetate symporter ActP from Klebsiella pneumoniae (strain 342).